The chain runs to 632 residues: Topoisomerase I damage affected protein 7 (632 aa).

Residues 1 to 18 show a composition bias toward polar residues; sequence MNSNSTIGRTTLGESDTI. 5 disordered regions span residues 1–33, 87–109, 236–267, 295–322, and 335–359; these read MNSN…NSRS, TLVS…QYDP, SPST…SSTN, PTSS…DDTT, and QSTT…TSPI. Asn-4 carries N-linked (GlcNAc...) asparagine glycosylation. Composition is skewed to low complexity over residues 19 to 33 and 87 to 108; these read SLSF…NSRS and TLVS…SQYD. Asn-253 carries N-linked (GlcNAc...) asparagine glycosylation. Residues 453-473 form a helical membrane-spanning segment; the sequence is IVGSVVGSVGGILICVLVVWF. Asn-488 is a glycosylation site (N-linked (GlcNAc...) asparagine). A compositionally biased stretch (polar residues) spans 506–537; that stretch reads QAKEASLQAQDSGSQQRNTETASANNPFSNEF. The disordered stretch occupies residues 506-551; it reads QAKEASLQAQDSGSQQRNTETASANNPFSNEFNFKARGNPPPVPPP. Residue Lys-508 forms a Glycyl lysine isopeptide (Lys-Gly) (interchain with G-Cter in ubiquitin) linkage. Residues Asn-553, Asn-558, and Asn-622 are each glycosylated (N-linked (GlcNAc...) asparagine). At Ser-624 the chain carries Phosphoserine.

It belongs to the TDA7 family.

The protein resides in the vacuole membrane. This is Topoisomerase I damage affected protein 7 (TDA7) from Saccharomyces cerevisiae (strain Lalvin EC1118 / Prise de mousse) (Baker's yeast).